The sequence spans 456 residues: Alcohol acyltransferase 17 (456 aa).

Residues His166 and Asp382 each act as proton acceptor in the active site.

This sequence belongs to the plant acyltransferase family. As to expression, expressed in fruit.

Its function is as follows. Involved in the biosynthesis of volatile esters which confer kiwifruit flavor. Alcohol acyl transferase that can use a wide range of alcohols as substrate to produce esters. In Actinidia deliciosa (Kiwi), this protein is Alcohol acyltransferase 17.